Consider the following 121-residue polypeptide: D-ornithine 4,5-aminomutase subunit alpha (121 aa).

Heterotetramer of 2 alpha (OraS) and 2 beta (OraE) subunits.

The catalysed reaction is D-ornithine = (2R,4S)-2,4-diaminopentanoate. With respect to regulation, increased activity in the presence of dithiothreitol (DTT) in vitro. Inhibited by 1 mM potassium phosphate and potassium chloride. Inhibited by L-alpha-ornithine, D,L-alpha-lysine, L-beta-lysine (50%-60%), L-alpha-lysine (26%) and by delta-amino-n-valeric acid to a lesser extent. Significant decrease in activity is observed in the presence of 0.2 mM p-chloromercuribenzoate, N-ethylmaleimide and also by 2 mM iodoacetate to a lesser extent but not inhibited by arsenite. In terms of biological role, component of a complex that catalyzes the reversible migration of the omega amino group of D-ornithine to C-4 to form (2R,4S)-2,4-diaminopentanoic acid. The role of OraS remains obscure; however, it seems to be required for a correct folding of the OraE subunit. The complex is active only on D-ornithine and 2,4-diaminopentanoic acid and not active on L-ornithine, L-beta-lysine, L-alpha-lysine or D-alpha-lysine. This Acetoanaerobium sticklandii (strain ATCC 12662 / DSM 519 / JCM 1433 / CCUG 9281 / NCIMB 10654 / HF) (Clostridium sticklandii) protein is D-ornithine 4,5-aminomutase subunit alpha (oraS).